Consider the following 184-residue polypeptide: MIEHNPTTIYGTTIVTVRKDGKVVIAGDGQVSLGNTVMKGNARKVRRIGKGNVIAGFAGATADAFTLLERLEAKLEQYPDQLMRASVELTKDWRTDRYLRKLEAMMLVADSKVTLALTGTGDVLEPEQGVMAIGSGGNYALAAARALIETDKSAEEIARKAMNIAADICIYTNHNIIVESLDAQ.

The active site involves threonine 12. 3 residues coordinate Na(+): alanine 166, cysteine 169, and threonine 172.

The protein belongs to the peptidase T1B family. HslV subfamily. In terms of assembly, a double ring-shaped homohexamer of HslV is capped on each side by a ring-shaped HslU homohexamer. The assembly of the HslU/HslV complex is dependent on binding of ATP.

The protein localises to the cytoplasm. The catalysed reaction is ATP-dependent cleavage of peptide bonds with broad specificity.. With respect to regulation, allosterically activated by HslU binding. Functionally, protease subunit of a proteasome-like degradation complex believed to be a general protein degrading machinery. This Brucella melitensis biotype 1 (strain ATCC 23456 / CCUG 17765 / NCTC 10094 / 16M) protein is ATP-dependent protease subunit HslV.